A 163-amino-acid chain; its full sequence is Phosphopantetheine adenylyltransferase (163 aa).

S9 is a binding site for substrate. ATP-binding positions include 9–10 and H17; that span reads SF. Positions 41, 75, and 89 each coordinate substrate. ATP contacts are provided by residues 90–92, E100, and 125–131; these read GIR and HLYVRSD.

It belongs to the bacterial CoaD family. In terms of assembly, homohexamer. Mg(2+) is required as a cofactor.

It is found in the cytoplasm. It catalyses the reaction (R)-4'-phosphopantetheine + ATP + H(+) = 3'-dephospho-CoA + diphosphate. It participates in cofactor biosynthesis; coenzyme A biosynthesis; CoA from (R)-pantothenate: step 4/5. Functionally, reversibly transfers an adenylyl group from ATP to 4'-phosphopantetheine, yielding dephospho-CoA (dPCoA) and pyrophosphate. The polypeptide is Phosphopantetheine adenylyltransferase (Borreliella burgdorferi (strain ZS7) (Borrelia burgdorferi)).